Consider the following 444-residue polypeptide: Trigger factor (444 aa).

The PPIase FKBP-type domain occupies 160–245 (DMQVTFDFEG…VKQVEKPKLP (86 aa)).

It belongs to the FKBP-type PPIase family. Tig subfamily.

The protein localises to the cytoplasm. It catalyses the reaction [protein]-peptidylproline (omega=180) = [protein]-peptidylproline (omega=0). Functionally, involved in protein export. Acts as a chaperone by maintaining the newly synthesized protein in an open conformation. Functions as a peptidyl-prolyl cis-trans isomerase. The chain is Trigger factor from Acinetobacter baumannii (strain AB0057).